The chain runs to 390 residues: EF-hand calcium-binding domain-containing protein 4A (390 aa).

Positions 1 to 27 (MSPRSTLRSPLPSRTARSSASSDTPSP) are enriched in low complexity. Residues 1–37 (MSPRSTLRSPLPSRTARSSASSDTPSPGADRQDRMSK) form a disordered region. EF-hand domains lie at 33–66 (DRMSKAKELFVLCDKEGKGFITKRDMQRLQQELP) and 67–102 (LSPEQLESVFESLDRDRNGYLTPLEFHTGLGELVGS). Positions 80, 82, 84, 86, and 91 each coordinate Ca(2+). Positions 173–357 (SHLQDALKEK…DDKDAHQAQK (185 aa)) form a coiled coil. Positions 206–234 (DMESQLKEERERRQALDSMRQGDKKEQLL) are disordered.

This sequence belongs to the EFCAB4 family.

This chain is EF-hand calcium-binding domain-containing protein 4A (cracr2b), found in Danio rerio (Zebrafish).